Consider the following 106-residue polypeptide: UPF0060 membrane protein Bxeno_B1021 (106 aa).

Transmembrane regions (helical) follow at residues 2–22 (KTFL…YLPW), 30–50 (SIWL…LLTL), 58–78 (VYAA…WCVD), and 82–102 (PTLW…IIAF).

It belongs to the UPF0060 family.

It is found in the cell inner membrane. The polypeptide is UPF0060 membrane protein Bxeno_B1021 (Paraburkholderia xenovorans (strain LB400)).